The sequence spans 514 residues: 2,3-bisphosphoglycerate-independent phosphoglycerate mutase (514 aa).

Mn(2+) contacts are provided by D14 and S64. Catalysis depends on S64, which acts as the Phosphoserine intermediate. Substrate is bound by residues H125, 155–156 (RD), R187, R193, 263–266 (RADR), and K336. Positions 403, 407, 444, 445, and 463 each coordinate Mn(2+).

The protein belongs to the BPG-independent phosphoglycerate mutase family. As to quaternary structure, monomer. Mn(2+) is required as a cofactor.

The catalysed reaction is (2R)-2-phosphoglycerate = (2R)-3-phosphoglycerate. It participates in carbohydrate degradation; glycolysis; pyruvate from D-glyceraldehyde 3-phosphate: step 3/5. In terms of biological role, catalyzes the interconversion of 2-phosphoglycerate and 3-phosphoglycerate. This Shewanella sp. (strain MR-4) protein is 2,3-bisphosphoglycerate-independent phosphoglycerate mutase.